The primary structure comprises 500 residues: MEIQNNLYGIDLYTILPESILIFCLLTTLIIDLSLDSKNKSWIIYLNTIGLILSGLFLCLQWNGIIPVTPFPSFKGDSFSIAFRFCIIIASLLSLLLSIDYIKRAGVQLMEFVIFLLGATIGGMFLCGANDLITIFTSLECLGLSSYLLAGYSKQDIRSNEAAMKYLLVGGASSAILAYGFSWLYGLSGGKIILSEIVDGLIFADFVNPLIKWITLTCIIVGLGFKISAVPFHQWTPDVYEGSPTPVVAFLSVASKTAGLALTIRIIATIFPYLENEWQFLLQILACLTMIVGNLVAITQTSMKRMLAYSSISQAGYLMIGIISSTNDGYASSLVYMLIYIFMNLGAFGCVILFGLRTGTDQIRDFSGLYLKDPWLASCLTIFLLSLGGIPPFAGFFGKIYLFWSGWQAGLYILTFVGLLTSVISIYYYLRIIKIMFVREAKEFSSYVKNYVIPVNSLLPQSSVETAMIVCMIASSVMGIAINPIIQVAQKTILSTIPFI.

The next 13 helical transmembrane spans lie at 15–35, 42–62, 79–99, 109–129, 132–152, 167–187, 201–221, 247–267, 278–298, 306–326, 334–354, 377–397, and 400–420; these read ILPE…DLSL, WIIY…CLQW, FSIA…LLSI, LMEF…LCGA, LITI…LAGY, LLVG…LYGL, LIFA…CIIV, VVAF…IRII, WQFL…LVAI, MLAY…ISST, LVYM…VILF, ASCL…AGFF, and IYLF…VGLL.

The protein belongs to the complex I subunit 2 family. As to quaternary structure, NDH is composed of at least 16 different subunits, 5 of which are encoded in the nucleus.

It localises to the plastid. The protein localises to the chloroplast thylakoid membrane. It catalyses the reaction a plastoquinone + NADH + (n+1) H(+)(in) = a plastoquinol + NAD(+) + n H(+)(out). The enzyme catalyses a plastoquinone + NADPH + (n+1) H(+)(in) = a plastoquinol + NADP(+) + n H(+)(out). In terms of biological role, NDH shuttles electrons from NAD(P)H:plastoquinone, via FMN and iron-sulfur (Fe-S) centers, to quinones in the photosynthetic chain and possibly in a chloroplast respiratory chain. The immediate electron acceptor for the enzyme in this species is believed to be plastoquinone. Couples the redox reaction to proton translocation, and thus conserves the redox energy in a proton gradient. The polypeptide is NAD(P)H-quinone oxidoreductase subunit 2, chloroplastic (Chaetosphaeridium globosum (Charophycean green alga)).